Here is a 136-residue protein sequence, read N- to C-terminus: UPF0216 protein PH0358 (136 aa).

It belongs to the UPF0216 family.

This is UPF0216 protein PH0358 from Pyrococcus horikoshii (strain ATCC 700860 / DSM 12428 / JCM 9974 / NBRC 100139 / OT-3).